The primary structure comprises 612 residues: Glutamine--fructose-6-phosphate aminotransferase [isomerizing] (612 aa).

Residue Cys2 is the Nucleophile; for GATase activity of the active site. A Glutamine amidotransferase type-2 domain is found at 2–220 (CGIVGAIRAH…DGDIALLASD (219 aa)). SIS domains are found at residues 288–428 (AKSV…VRGL) and 461–602 (WAQQ…VDKP). Residue Lys607 is the For Fru-6P isomerization activity of the active site.

Homodimer.

Its subcellular location is the cytoplasm. It carries out the reaction D-fructose 6-phosphate + L-glutamine = D-glucosamine 6-phosphate + L-glutamate. Catalyzes the first step in hexosamine metabolism, converting fructose-6P into glucosamine-6P using glutamine as a nitrogen source. The sequence is that of Glutamine--fructose-6-phosphate aminotransferase [isomerizing] from Neisseria meningitidis serogroup A / serotype 4A (strain DSM 15465 / Z2491).